The primary structure comprises 970 residues: Disease resistance protein RGA2 (970 aa).

Residues 135-438 enclose the NB-ARC domain; the sequence is RQAVRRETGS…MAHGFLLSKG (304 aa). An ATP-binding site is contributed by 182–189; sequence GMGGLGKT. LRR repeat units lie at residues 525–548, 550–571, 573–594, 595–619, 638–662, 672–697, 752–777, 787–811, 813–832, 833–857, 859–882, 884–906, 907–931, and 946–970; these read FISL…IGDL, HLRY…LCKL, NLQT…ETSK, LGSL…IGSL, LGEL…KNDK, KGNL…EVKV, LPCL…DIDV, FPSL…EGEE, FPVL…LSSN, LRAL…MFKN, ANLK…LASL, ALKS…GLEG, LSSL…LQHL, and IKRC…NIYI.

The protein belongs to the disease resistance NB-LRR family.

Its function is as follows. Disease resistance protein. Resistance proteins guard the plant against pathogens that contain an appropriate avirulence protein via a direct or indirect interaction with this avirulence protein. That triggers a defense system which restricts the pathogen growth. Confers a broad resistance to all known races of P.infestans. The chain is Disease resistance protein RGA2 (RGA2) from Solanum bulbocastanum (Wild potato).